Reading from the N-terminus, the 129-residue chain is Translation initiation factor 5A (129 aa).

At Lys-36 the chain carries Hypusine.

The protein belongs to the eIF-5A family.

The protein localises to the cytoplasm. In terms of biological role, functions by promoting the formation of the first peptide bond. The sequence is that of Translation initiation factor 5A (eif5a) from Thermoplasma acidophilum (strain ATCC 25905 / DSM 1728 / JCM 9062 / NBRC 15155 / AMRC-C165).